Reading from the N-terminus, the 82-residue chain is Cytochrome c oxidase-assembly factor cox-23, mitochondrial (82 aa).

The interval 1–27 is disordered; that stretch reads MAQAGSENKEPWNEETRAKFEGKSRSE. Residues 7–27 are compositionally biased toward basic and acidic residues; it reads ENKEPWNEETRAKFEGKSRSE. Residues 29–71 enclose the CHCH domain; it reads LDPCQEAAQRSIRCLHRNQGDRTMCSDYFEAYRECKKQWIERR. Short sequence motifs (cx9C motif) lie at residues 32–42 and 53–63; these read CQEAAQRSIRC and CSDYFEAYREC. 2 disulfide bridges follow: Cys-32–Cys-63 and Cys-42–Cys-53.

It belongs to the COX23 family.

It localises to the mitochondrion intermembrane space. In terms of biological role, required for the assembly of cytochrome c oxidase. This Neurospora crassa (strain ATCC 24698 / 74-OR23-1A / CBS 708.71 / DSM 1257 / FGSC 987) protein is Cytochrome c oxidase-assembly factor cox-23, mitochondrial (cox-23).